A 421-amino-acid chain; its full sequence is Serine hydroxymethyltransferase (421 aa).

Residues L121 and 125–127 each bind (6S)-5,6,7,8-tetrahydrofolate; that span reads GHL. At K229 the chain carries N6-(pyridoxal phosphate)lysine.

It belongs to the SHMT family. As to quaternary structure, homodimer. Pyridoxal 5'-phosphate serves as cofactor.

It localises to the cytoplasm. The catalysed reaction is (6R)-5,10-methylene-5,6,7,8-tetrahydrofolate + glycine + H2O = (6S)-5,6,7,8-tetrahydrofolate + L-serine. It participates in one-carbon metabolism; tetrahydrofolate interconversion. The protein operates within amino-acid biosynthesis; glycine biosynthesis; glycine from L-serine: step 1/1. Functionally, catalyzes the reversible interconversion of serine and glycine with tetrahydrofolate (THF) serving as the one-carbon carrier. This reaction serves as the major source of one-carbon groups required for the biosynthesis of purines, thymidylate, methionine, and other important biomolecules. Also exhibits THF-independent aldolase activity toward beta-hydroxyamino acids, producing glycine and aldehydes, via a retro-aldol mechanism. In Haemophilus influenzae (strain PittEE), this protein is Serine hydroxymethyltransferase.